The chain runs to 78 residues: Acyl carrier protein (78 aa).

The region spanning 1–75 (MIKEKILSIV…DLISVVKNST (75 aa)) is the Carrier domain. At serine 35 the chain carries O-(pantetheine 4'-phosphoryl)serine.

The protein belongs to the acyl carrier protein (ACP) family. 4'-phosphopantetheine is transferred from CoA to a specific serine of apo-ACP by AcpS. This modification is essential for activity because fatty acids are bound in thioester linkage to the sulfhydryl of the prosthetic group.

It localises to the cytoplasm. It participates in lipid metabolism; fatty acid biosynthesis. Functionally, carrier of the growing fatty acid chain in fatty acid biosynthesis. The protein is Acyl carrier protein (acpP) of Shigella flexneri.